A 147-amino-acid chain; its full sequence is NAD(P)H-quinone oxidoreductase subunit N (147 aa).

The protein belongs to the complex I NdhN subunit family. NDH-1 can be composed of about 15 different subunits; different subcomplexes with different compositions have been identified which probably have different functions.

It is found in the cellular thylakoid membrane. It catalyses the reaction a plastoquinone + NADH + (n+1) H(+)(in) = a plastoquinol + NAD(+) + n H(+)(out). It carries out the reaction a plastoquinone + NADPH + (n+1) H(+)(in) = a plastoquinol + NADP(+) + n H(+)(out). Functionally, NDH-1 shuttles electrons from an unknown electron donor, via FMN and iron-sulfur (Fe-S) centers, to quinones in the respiratory and/or the photosynthetic chain. The immediate electron acceptor for the enzyme in this species is believed to be plastoquinone. Couples the redox reaction to proton translocation, and thus conserves the redox energy in a proton gradient. Cyanobacterial NDH-1 also plays a role in inorganic carbon-concentration. This Synechococcus sp. (strain JA-3-3Ab) (Cyanobacteria bacterium Yellowstone A-Prime) protein is NAD(P)H-quinone oxidoreductase subunit N.